Consider the following 120-residue polypeptide: Glycine cleavage system H protein (120 aa).

One can recognise a Lipoyl-binding domain in the interval 17-99; sequence VATVGITAHA…MGAGWFFKLK (83 aa). An N6-lipoyllysine modification is found at K58.

Belongs to the GcvH family. In terms of assembly, the glycine cleavage system is composed of four proteins: P, T, L and H. (R)-lipoate is required as a cofactor.

Functionally, the glycine cleavage system catalyzes the degradation of glycine. The H protein shuttles the methylamine group of glycine from the P protein to the T protein. The polypeptide is Glycine cleavage system H protein (Rhizobium rhizogenes (strain K84 / ATCC BAA-868) (Agrobacterium radiobacter)).